The primary structure comprises 291 residues: Phosphate import ATP-binding protein PstB (291 aa).

The ABC transporter domain occupies 44–286 (VKAREVNVFY…PEEKRTQDYI (243 aa)). ATP is bound at residue 76 to 83 (GPSGCGKS).

Belongs to the ABC transporter superfamily. Phosphate importer (TC 3.A.1.7) family. As to quaternary structure, the complex is composed of two ATP-binding proteins (PstB), two transmembrane proteins (PstC and PstA) and a solute-binding protein (PstS).

It is found in the cell inner membrane. The catalysed reaction is phosphate(out) + ATP + H2O = ADP + 2 phosphate(in) + H(+). Its function is as follows. Part of the ABC transporter complex PstSACB involved in phosphate import. Responsible for energy coupling to the transport system. This Chelativorans sp. (strain BNC1) protein is Phosphate import ATP-binding protein PstB.